Here is a 41-residue protein sequence, read N- to C-terminus: Large ribosomal subunit protein bL36 (41 aa).

This sequence belongs to the bacterial ribosomal protein bL36 family.

This Bartonella tribocorum (strain CIP 105476 / IBS 506) protein is Large ribosomal subunit protein bL36.